We begin with the raw amino-acid sequence, 477 residues long: UDP-N-acetylmuramate--L-alanine ligase (477 aa).

125–131 (GTHGKTT) serves as a coordination point for ATP.

This sequence belongs to the MurCDEF family.

The protein resides in the cytoplasm. The catalysed reaction is UDP-N-acetyl-alpha-D-muramate + L-alanine + ATP = UDP-N-acetyl-alpha-D-muramoyl-L-alanine + ADP + phosphate + H(+). It participates in cell wall biogenesis; peptidoglycan biosynthesis. Cell wall formation. In Acidothermus cellulolyticus (strain ATCC 43068 / DSM 8971 / 11B), this protein is UDP-N-acetylmuramate--L-alanine ligase.